An 81-amino-acid chain; its full sequence is Large ribosomal subunit protein eL31 (81 aa).

It belongs to the eukaryotic ribosomal protein eL31 family.

This chain is Large ribosomal subunit protein eL31 (rpl31e), found in Methanothermobacter thermautotrophicus (strain ATCC 29096 / DSM 1053 / JCM 10044 / NBRC 100330 / Delta H) (Methanobacterium thermoautotrophicum).